We begin with the raw amino-acid sequence, 928 residues long: Mitogen-activated protein kinase kinase kinase dlk-1 (928 aa).

Residues 1–72 form a disordered region; it reads MTSTTMVTTL…GQKEGSPDPK (72 aa). A compositionally biased stretch (polar residues) spans 42 to 52; that stretch reads LVTQSAPNTPI. The segment covering 53 to 69 has biased composition (basic and acidic residues); sequence QHREQANAEFGQKEGSP. Residues 135–377 enclose the Protein kinase domain; the sequence is ISELEWLGSG…FSHIRQHWEI (243 aa). Residues 141–149 and lysine 162 contribute to the ATP site; that span reads LGSGSQGAV. The active-site Proton acceptor is the aspartate 246. The leucine-zipper stretch occupies residues 459 to 480; the sequence is LQGCFTELKLKESELAEWEKDL. 3 disordered regions span residues 483-575, 644-696, and 802-845; these read REQW…DAIR, RRVS…PSRN, and ENAN…SMES. Residues 509 to 519 are compositionally biased toward acidic residues; that stretch reads GYDDMSSDEDV. The span at 530–557 shows a compositional bias: low complexity; that stretch reads SNTSSSSGVQSSPFSRQSSSRSSAGQQT. The segment at 605 to 814 is important for interaction between isoform a and isoform c; the sequence is SAGAGSCTAI…NDVDLTSSMD (210 aa). Residues 647–656 are compositionally biased toward polar residues; that stretch reads STSVNKSTAV. Residues 677–695 show a composition bias toward low complexity; it reads SCSSPRSSSKLNRSSYPSR. The span at 823–833 shows a compositional bias: acidic residues; that stretch reads ADVESSEEDEG. Phosphoserine is present on residues serine 874 and serine 878. The SDGLSD hexapeptide signature appears at 874–879; sequence SDGLSD.

This sequence belongs to the protein kinase superfamily. STE Ser/Thr protein kinase family. MAP kinase kinase kinase subfamily. As to quaternary structure, homooligomer (via leucine zipper domain and hexapeptide motif). Isoform a (via leucine zipper domain) forms a heterooligomer with isoform c (via leucine zipper domain). Isoform c does not self-associate. Requires Mg(2+) as cofactor. In terms of processing, ubiquitinated by rpm-1. Negatively regulated by ubiquitination by fsn-1 bound rpm-1, followed by degradation. Post-translationally, phosphorylation at Ser-874 and/or at Ser-878 abolishes interaction with isoform c and promotes binding to isoform a kinase domain (likely in trans) resulting in isoform a self-association and activation. In terms of tissue distribution, expressed in nerve ring, nerve cord, neurons, and pharynx.

It is found in the synapse. The protein resides in the cytoplasm. Its subcellular location is the cell projection. The protein localises to the axon. It localises to the dendrite. It is found in the cilium. It catalyses the reaction L-seryl-[protein] + ATP = O-phospho-L-seryl-[protein] + ADP + H(+). It carries out the reaction L-threonyl-[protein] + ATP = O-phospho-L-threonyl-[protein] + ADP + H(+). Inactive when associated with isoform c. Dissociation from isoform c, which is dependent on the phosphorylation of the C-terminal hexapeptide, results in self-association and activation. Transient increase in Ca(2+) levels caused by axonal injury or synaptic activity triggers the dissociation of isoform a from isoform c; the dissociation may be influenced by the phosphorylation status of the C-terminal hexapeptide. Its function is as follows. Component of a MAP kinase pathway that functions presynaptically to regulate synaptic architecture and presynaptic differentiation. Phosphorylates and activates mkk-4. Has a role in axonal regrowth following injury and synaptogenesis. Plays a role in modulating polymerization of neuronal microtubules. Also promotes tubulin post-translational modifications that protect microtubules. Plays a role in cilium length regulation, possibly by reducing rab-5 mediated endocytosis, and may also have a role in intraflagellar transport in cilia. Plays a role in the formation of muscle connections, also called muscle arm extensions, between the body wall and the motor axons in the dorsal and ventral cord. Has a role in synapse and axon development, and in axonal regrowth following injury. In terms of biological role, by forming heterooligomers with isoform a, acts as an inhibitor of isoform a activation. Its inhibitory function is independent of its catalytic activity. In Caenorhabditis elegans, this protein is Mitogen-activated protein kinase kinase kinase dlk-1 (dlk-1).